A 450-amino-acid polypeptide reads, in one-letter code: 23S rRNA (uracil(1939)-C(5))-methyltransferase RlmD (450 aa).

Positions 15 to 73 (KAVPAKNLTVTVASLDPFGQGVARHEGKTVFVTGVLPGEQAEVQLTEEKRQFSHAKLKR) constitute a TRAM domain. Residues cysteine 86, cysteine 92, cysteine 95, and cysteine 173 each contribute to the [4Fe-4S] cluster site. S-adenosyl-L-methionine is bound by residues glutamine 276, phenylalanine 305, asparagine 310, glutamate 326, asparagine 353, and aspartate 374. Cysteine 400 functions as the Nucleophile in the catalytic mechanism.

The protein belongs to the class I-like SAM-binding methyltransferase superfamily. RNA M5U methyltransferase family. RlmD subfamily.

The catalysed reaction is uridine(1939) in 23S rRNA + S-adenosyl-L-methionine = 5-methyluridine(1939) in 23S rRNA + S-adenosyl-L-homocysteine + H(+). Functionally, catalyzes the formation of 5-methyl-uridine at position 1939 (m5U1939) in 23S rRNA. This is 23S rRNA (uracil(1939)-C(5))-methyltransferase RlmD from Pectobacterium atrosepticum (strain SCRI 1043 / ATCC BAA-672) (Erwinia carotovora subsp. atroseptica).